A 294-amino-acid chain; its full sequence is tRNA dimethylallyltransferase (294 aa).

10 to 17 contributes to the ATP binding site; it reads GPTAVGKT. Residue 12-17 coordinates substrate; it reads TAVGKT. Positions 35–38 are interaction with substrate tRNA; that stretch reads DSQQ.

Belongs to the IPP transferase family. In terms of assembly, monomer. Requires Mg(2+) as cofactor.

It catalyses the reaction adenosine(37) in tRNA + dimethylallyl diphosphate = N(6)-dimethylallyladenosine(37) in tRNA + diphosphate. Catalyzes the transfer of a dimethylallyl group onto the adenine at position 37 in tRNAs that read codons beginning with uridine, leading to the formation of N6-(dimethylallyl)adenosine (i(6)A). In Streptococcus pneumoniae serotype 4 (strain ATCC BAA-334 / TIGR4), this protein is tRNA dimethylallyltransferase.